We begin with the raw amino-acid sequence, 79 residues long: RNA-binding protein Hfq (79 aa).

The Sm domain maps to 10–70; it reads DAFLNHVRKT…ISTIMPAQPI (61 aa).

This sequence belongs to the Hfq family. In terms of assembly, homohexamer.

RNA chaperone that binds small regulatory RNA (sRNAs) and mRNAs to facilitate mRNA translational regulation in response to envelope stress, environmental stress and changes in metabolite concentrations. Also binds with high specificity to tRNAs. This is RNA-binding protein Hfq from Ruegeria pomeroyi (strain ATCC 700808 / DSM 15171 / DSS-3) (Silicibacter pomeroyi).